Here is a 59-residue protein sequence, read N- to C-terminus: Large ribosomal subunit protein bL32 (59 aa).

The tract at residues Met1 to Glu59 is disordered. The span at Arg49–Glu59 shows a compositional bias: basic residues.

This sequence belongs to the bacterial ribosomal protein bL32 family.

The protein is Large ribosomal subunit protein bL32 of Neisseria gonorrhoeae (strain ATCC 700825 / FA 1090).